The following is a 370-amino-acid chain: Neutral protease 2 homolog AFUA_4G13750 (370 aa).

The N-terminal stretch at 1-19 (MKVTILASAILALINGALA) is a signal peptide. A propeptide spanning residues 20 to 172 (LPANTPTLDV…PQAIKLLDRR (153 aa)) is cleaved from the precursor. 2 disulfide bridges follow: Cys-178-Cys-250 and Cys-257-Cys-275. His-300 is a binding site for Zn(2+). Glu-301 is an active-site residue. Zn(2+)-binding residues include His-304 and Asp-315.

Belongs to the peptidase M35 family. Zn(2+) is required as a cofactor.

It localises to the secreted. The catalysed reaction is Preferential cleavage of bonds with hydrophobic residues in P1'. Also 3-Asn-|-Gln-4 and 8-Gly-|-Ser-9 bonds in insulin B chain.. Its function is as follows. Secreted metalloproteinase that allows assimilation of proteinaceous substrates. Shows high activities on basic nuclear substrates such as histone and protamine. May be involved in virulence. The protein is Neutral protease 2 homolog AFUA_4G13750 of Aspergillus fumigatus (strain ATCC MYA-4609 / CBS 101355 / FGSC A1100 / Af293) (Neosartorya fumigata).